The following is a 222-amino-acid chain: Noggin (222 aa).

Residues 1 to 19 (MDHSQCLVTIYALMVFLGL) form the signal peptide. The N-linked (GlcNAc...) asparagine glycan is linked to Asn-61. 4 disulfides stabilise this stretch: Cys-145–Cys-182, Cys-168–Cys-218, Cys-174–Cys-220, and Cys-197–Cys-205.

The protein belongs to the noggin family. As to quaternary structure, homodimer.

Its subcellular location is the secreted. Patterns the embryo by interrupting bone morphogenetic proteins (BMP) signaling. Binds BMP-4 and BMP-2 with high affinity. Can abolish BMP-4 activity by blocking binding to cognate cell-surface receptors. Capable of inducing dorsal development in embryos. Causes dorsal mesodermal differentiation of animal cap ectoderm when coexpressed with xWNT-8 and nuclear, sequence-specific DNA-binding protein xBRA. None of these molecules causes dorsal mesoderm formation when expressed alone. This Xenopus laevis (African clawed frog) protein is Noggin (nog).